The sequence spans 386 residues: Patatin-2-Kuras 2 (386 aa).

An N-terminal signal peptide occupies residues 1–23 (MATTKSFLILFFMILATTSSTCA). Residues 32-229 (LSIDGGGIKG…TVGDPALLSL (198 aa)) enclose the PNPLA domain. The short motif at 36-41 (GGGIKG) is the GXGXXG element. A GXSXG motif is present at residues 75 to 79 (GTSTG). S77 (nucleophile) is an active-site residue. Residue N115 is glycosylated (N-linked (GlcNAc...) asparagine). The active-site Proton acceptor is the D215. A DGA/G motif is present at residues 215–217 (DGA). A coiled-coil region spans residues 321–384 (ENALTGTTTE…DRKKLRANKA (64 aa)).

This sequence belongs to the patatin family.

It is found in the vacuole. In terms of biological role, probable lipolytic acyl hydrolase (LAH), an activity which is thought to be involved in the response of tubers to pathogens. The polypeptide is Patatin-2-Kuras 2 (pat2-k2) (Solanum tuberosum (Potato)).